The chain runs to 229 residues: Translation initiation factor IF-3 (229 aa).

Disordered stretches follow at residues 1–21 (MAIQQRDSRGGTNRDARTNRR) and 184–229 (QAQR…AGPR). Residues 192–203 (AAAQAAPAAAPQ) are compositionally biased toward low complexity. The span at 204-221 (PGAPAAPPAAPAPAPAPE) shows a compositional bias: pro residues.

It belongs to the IF-3 family. Monomer.

The protein resides in the cytoplasm. Functionally, IF-3 binds to the 30S ribosomal subunit and shifts the equilibrium between 70S ribosomes and their 50S and 30S subunits in favor of the free subunits, thus enhancing the availability of 30S subunits on which protein synthesis initiation begins. The polypeptide is Translation initiation factor IF-3 (Anaeromyxobacter sp. (strain Fw109-5)).